We begin with the raw amino-acid sequence, 465 residues long: Presenilin spe-4 (465 aa).

Residues 1–18 (MDTLRSISSELVRSSQLR) lie on the Cytoplasmic side of the membrane. The helical transmembrane segment at 19–39 (WTLFSVIANMSLTLSIWIGVY) threads the bilayer. The Lumenal segment spans residues 40–71 (NMEVNSELSKTYFLDPSFEQTTGNLLLDGFIN). The helical transmembrane segment at 72–92 (GVGTILVLGCVSFIMLAFVLF) threads the bilayer. At 93 to 96 (DFRR) the chain is on the cytoplasmic side. Residues 97-117 (IVKAWLTLSCLLILFGVSAQT) form a helical membrane-spanning segment. Topologically, residues 118-136 (LHDMFSQVFDQDDNNQYYM) are lumenal. A helical transmembrane segment spans residues 137 to 157 (TIVLIVVPTVVYGFGGIYAFF). Residues 158-160 (SNS) lie on the Cytoplasmic side of the membrane. Residues 161–181 (SLILHQIFVVTNCSLISVFYL) traverse the membrane as a helical segment. The Lumenal segment spans residues 182-190 (RVFPSKTTW). A helical membrane pass occupies residues 191 to 211 (FVLWIVLFWDLFAVLAPMGPL). The active site involves aspartate 200. Residues 212 to 389 (KKVQEKASDY…DALNDGEVLR (178 aa)) lie on the Cytoplasmic side of the membrane. The interval 287–356 (INPDSVPTEH…SDISTAEECD (70 aa)) is disordered. Over residues 326 to 350 (SETSSGSSNLSSSDSSTTVSTSDIS) the composition is skewed to low complexity. Residues 390–410 (LGFGDFVFYSLLIGQAAASGC) form a helical membrane-spanning segment. Aspartate 394 is an active-site residue. A topological domain (lumenal) is located at residue proline 411. The helical transmembrane segment at 412–432 (FAVISAALGILFGLVVTLTVF) threads the bilayer. Over 433–439 (STEESTT) the chain is Cytoplasmic. The PAL motif lies at 440–442 (PAL). Positions 440–460 (PALPLPVICGTFCYFSSMFFW) form an intramembrane region, helical. Over 461–465 (EQLYG) the chain is Cytoplasmic.

It belongs to the peptidase A22A family. Homodimer. Potential component of the gamma-secretase complex, a complex probably composed of the presenilin homodimer (sel-12, hop-1 or spe-4), nicastrin (aph-2), aph-1 and pen-2.

The protein resides in the endoplasmic reticulum membrane. The protein localises to the golgi apparatus. It is found in the cis-Golgi network membrane. Functionally, potential catalytic subunit of the gamma-secretase complex during spermatogenesis, an endoprotease complex that catalyzes the intramembrane cleavage of integral membrane proteins such as Notch receptors (lin-12 or glp-1). Involved in spermatid formation during meiosis II. May be required for proper localization of macromolecules that are subject to asymmetric partitioning during spermatogenesis. In Caenorhabditis elegans, this protein is Presenilin spe-4.